A 676-amino-acid polypeptide reads, in one-letter code: DNA ligase (676 aa).

NAD(+) is bound by residues 41-45, 90-91, and Glu-123; these read DLTYD and SL. Lys-125 (N6-AMP-lysine intermediate) is an active-site residue. NAD(+) contacts are provided by Arg-146, Glu-180, Lys-293, and Lys-317. Zn(2+) contacts are provided by Cys-408, Cys-411, Cys-424, and Cys-429.

Belongs to the NAD-dependent DNA ligase family. LigA subfamily. Requires Mg(2+) as cofactor. The cofactor is Mn(2+).

The enzyme catalyses NAD(+) + (deoxyribonucleotide)n-3'-hydroxyl + 5'-phospho-(deoxyribonucleotide)m = (deoxyribonucleotide)n+m + AMP + beta-nicotinamide D-nucleotide.. Functionally, DNA ligase that catalyzes the formation of phosphodiester linkages between 5'-phosphoryl and 3'-hydroxyl groups in double-stranded DNA using NAD as a coenzyme and as the energy source for the reaction. It is essential for DNA replication and repair of damaged DNA. The sequence is that of DNA ligase from Borrelia turicatae (strain 91E135).